The following is a 161-amino-acid chain: Ribosome maturation factor RimP (161 aa).

Belongs to the RimP family.

The protein resides in the cytoplasm. Required for maturation of 30S ribosomal subunits. The chain is Ribosome maturation factor RimP from Rickettsia massiliae (strain Mtu5).